Reading from the N-terminus, the 161-residue chain is Protein lin-52 (161 aa).

The disordered stretch occupies residues 137–161; sequence TGSASPRYLQPTPPKNVAEETTGSQ.

It belongs to the lin-52 family. As to quaternary structure, component of the DRM complex, at least composed of lin-9, lin-35, lin-37, lin-52, lin-53, lin-54- dpl-1 and efl-1. Interacts with zft-11; the interaction is required to suppress the activation of non-neuronal genes in neurons.

Its subcellular location is the nucleus. Synthetic multivulva class B (synMuvB) protein. SynMuvB proteins are required to repress the induction of vulval development by Ras signaling and probably act by forming the multiprotein DRM complex that represses transcription. In association with the zinc finger protein ztf-11, negatively regulates the expression of non-neuronal genes during neurogenesis. The chain is Protein lin-52 from Caenorhabditis elegans.